The following is a 466-amino-acid chain: Glycine--tRNA ligase (466 aa).

Arg-104 and Glu-178 together coordinate substrate. ATP contacts are provided by residues 210-212, 220-225, 294-295, and 338-341; these read RNE, FRTREF, EL, and GADR. 225 to 229 contacts substrate; it reads FEQME. 334–338 contributes to the substrate binding site; sequence EPSLG.

It belongs to the class-II aminoacyl-tRNA synthetase family. In terms of assembly, homodimer.

The protein localises to the cytoplasm. It carries out the reaction tRNA(Gly) + glycine + ATP = glycyl-tRNA(Gly) + AMP + diphosphate. Functionally, catalyzes the attachment of glycine to tRNA(Gly). This chain is Glycine--tRNA ligase, found in Geobacillus thermodenitrificans (strain NG80-2).